The sequence spans 247 residues: Transmembrane protein 69 (247 aa).

Transmembrane regions (helical) follow at residues 97 to 117 (ALCV…VMLM), 122 to 142 (IPIL…FLGG), 159 to 179 (YLNL…FLIS), 185 to 205 (AIVT…FLLP), and 216 to 236 (IVVT…KSSF).

It localises to the membrane. In Homo sapiens (Human), this protein is Transmembrane protein 69 (TMEM69).